A 125-amino-acid polypeptide reads, in one-letter code: Large ribosomal subunit protein bL12 (125 aa).

The protein belongs to the bacterial ribosomal protein bL12 family. In terms of assembly, homodimer. Part of the ribosomal stalk of the 50S ribosomal subunit. Forms a multimeric L10(L12)X complex, where L10 forms an elongated spine to which 2 to 4 L12 dimers bind in a sequential fashion. Binds GTP-bound translation factors.

Its function is as follows. Forms part of the ribosomal stalk which helps the ribosome interact with GTP-bound translation factors. Is thus essential for accurate translation. The sequence is that of Large ribosomal subunit protein bL12 from Hyphomonas neptunium (strain ATCC 15444).